The primary structure comprises 411 residues: RING-H2 finger protein ATL65 (411 aa).

The tract at residues 1 to 32 is disordered; that stretch reads MRFVAPPPRSGDNSPSPSPSSGISEEILSRSS. Residues 10-21 are compositionally biased toward low complexity; sequence SGDNSPSPSPSS. The helical transmembrane segment at 36 to 56 threads the bilayer; it reads LEFSPPLIAMVVVLAAAFLFV. The RING-type; atypical zinc-finger motif lies at 156–198; sequence CAVCLLEFEEGDYVRTLPLCFHAFHLECIDEWLRSHPNCPLCR.

Belongs to the RING-type zinc finger family. ATL subfamily.

Its subcellular location is the membrane. It catalyses the reaction S-ubiquitinyl-[E2 ubiquitin-conjugating enzyme]-L-cysteine + [acceptor protein]-L-lysine = [E2 ubiquitin-conjugating enzyme]-L-cysteine + N(6)-ubiquitinyl-[acceptor protein]-L-lysine.. The protein operates within protein modification; protein ubiquitination. The sequence is that of RING-H2 finger protein ATL65 (ATL65) from Arabidopsis thaliana (Mouse-ear cress).